A 787-amino-acid polypeptide reads, in one-letter code: Protein translocase subunit SecA (787 aa).

ATP contacts are provided by residues glutamine 85, 103–107, and aspartate 492; that span reads GEGKT.

The protein belongs to the SecA family. In terms of assembly, monomer and homodimer. Part of the essential Sec protein translocation apparatus which comprises SecA, SecYEG and auxiliary proteins SecDF. Other proteins may also be involved.

It localises to the cell membrane. Its subcellular location is the cytoplasm. The catalysed reaction is ATP + H2O + cellular proteinSide 1 = ADP + phosphate + cellular proteinSide 2.. Functionally, part of the Sec protein translocase complex. Interacts with the SecYEG preprotein conducting channel. Has a central role in coupling the hydrolysis of ATP to the transfer of proteins into and across the cell membrane, serving as an ATP-driven molecular motor driving the stepwise translocation of polypeptide chains across the membrane. The chain is Protein translocase subunit SecA from Limosilactobacillus reuteri (strain DSM 20016) (Lactobacillus reuteri).